Reading from the N-terminus, the 1024-residue chain is Non-canonical nonribosomal peptide synthetase FrzA (1024 aa).

An adenylation (A) domain region spans residues 29 to 425; sequence RAQKSHQAIA…GRRDHQVKVR (397 aa). One can recognise a Carrier domain in the interval 534-611; the sequence is NASQDVRSAL…ALTSIIKQRL (78 aa). At Ser-571 the chain carries O-(pantetheine 4'-phosphoryl)serine. The Thioester reductase (TE) domain maps to 655–898; that stretch reads LTGGTGFVGA…VPVDYVNAAI (244 aa).

The protein belongs to the NRP synthetase family. The cofactor is pantetheine 4'-phosphate.

The catalysed reaction is L-tyrosinal + AMP + diphosphate + NADP(+) = L-tyrosine + ATP + NADPH + H(+). Its pathway is secondary metabolite biosynthesis. Its function is as follows. Non-canonical nonribosomal peptide synthetase; part of the gene cluster that mediates the biosynthesis of the alkaloid (-)-FR901483, a potent immunosuppressant that shows efficacy in animal models and a probable inhibitor of purine nucleotide biosynthesis by targeting phosphoribosylpyrophosphate amidotransferase (PPAT). Within the pathway, FrzA catalyzes the reduction of L-tyrosine via its C-terminal reductase domain to produce L-tyrosinal. The biosynthesis of (-)-FR901483 starts with the condensation of two L-tyrosines to yield (S,S)-dityrosyl-piperazine. This process occurs in 3 steps with the non-canonical nonribosomal peptide synthetase FrzA catalyzing the reduction of L-tyrosine into L-tyrosinal, the spontaneous condensation of 2 L-tyrosinal units, and the subsequent reduction by the NmrA-like family domain-containing oxidoreductase FrzB. The cytochrome P450 monooxygenase FrzC then performs coupling between N10 and C1' to morph the piperazine into a 1,4-diazabicyclo[3.2.1]octane spiro-fused to a 2,5-cyclohexadienone. The dienone portion is further reduced to cyclohexanone by the flavin-dependent reductase FrzD. The methyltranserases (MTs) FrzE and FrzF are then involved in the methylation at the C10' amine and the C4 phenolic oxygen, respectively. The order of the two MTs appear to be interchangeable. Cleavage of the C9-N10' bond by the dioxygenase FrzG then leads to formation of a conjugated iminium. In addition to the oxidation of C9, an additional dehydrogenation between C7 and C8 can occur to give a likely shunt product. The next biosynthetic step is the intramolecular aldol condensation catalyzed by the newly identified aldolase FrzH to yield an aza-tricyclic product with the formation of a C9-C3' bond. The short-chain dehydrogenase/reductase FrzI then produces dephospho-(-)-FR901483 that is phosphorylated at C4'-OH into (-)-FR901483 by the phosphotransferase FrzJ. The polypeptide is Non-canonical nonribosomal peptide synthetase FrzA (Cladobotryum sp).